The chain runs to 253 residues: Patatin-like phospholipase domain-containing protein 4 (253 aa).

Residues 6–176 (LSFAACGFLG…TNALPILPVG (171 aa)) enclose the PNPLA domain. Positions 41–45 (GASAG) match the GXSXG motif. The Nucleophile role is filled by serine 43. Aspartate 163 functions as the Proton acceptor in the catalytic mechanism. A DGA/G motif is present at residues 163-165 (DGG).

Expressed in all tissues examined, including heart, brain, placenta, lung, liver, muscle, kidney, pancreas and spleen.

It is found in the mitochondrion. The catalysed reaction is a triacylglycerol + H2O = a diacylglycerol + a fatty acid + H(+). It catalyses the reaction a 1,2-diacyl-sn-glycero-3-phosphocholine + H2O = a 1-acyl-sn-glycero-3-phosphocholine + a fatty acid + H(+). The enzyme catalyses an all-trans-retinyl ester + H2O = all-trans-retinol + a fatty acid + H(+). It carries out the reaction 2 a 1-acylglycerol = a 1,2-diacylglycerol + glycerol. The catalysed reaction is a 1-acylglycerol + a 1,2-diacylglycerol = a triacylglycerol + glycerol. It catalyses the reaction a 1-acylglycerol + a 1,3-diacylglycerol = a triacylglycerol + glycerol. The enzyme catalyses a triacylglycerol + H2O = a 1,2-diacylglycerol + a fatty acid + H(+). It carries out the reaction a triacylglycerol + H2O = a 1,3-diacylglycerol + a fatty acid + H(+). The catalysed reaction is a triacylglycerol + all-trans-retinol = an all-trans-retinyl ester + a diacylglycerol. It catalyses the reaction 2 1-(9Z-octadecenoyl)-glycerol = 1,2-di-(9Z-octadecenoyl)-glycerol + glycerol. The enzyme catalyses 1-(9Z-octadecenoyl)-glycerol + 1,2-di-(9Z-octadecenoyl)-glycerol = 1,2,3-tri-(9Z-octadecenoyl)-glycerol + glycerol. It carries out the reaction 1-(9Z-octadecenoyl)-glycerol + 1,3-di-(9Z-octadecenoyl)-glycerol = 1,2,3-tri-(9Z-octadecenoyl)-glycerol + glycerol. The catalysed reaction is 1,2-di-(9Z-octadecenoyl)-glycerol + (9Z)-octadecenoate + H(+) = 1,2,3-tri-(9Z-octadecenoyl)-glycerol + H2O. It catalyses the reaction 1,2,3-tri-(9Z-octadecenoyl)-glycerol + H2O = 1,3-di-(9Z-octadecenoyl)-glycerol + (9Z)-octadecenoate + H(+). The enzyme catalyses all-trans-retinyl hexadecanoate + H2O = all-trans-retinol + hexadecanoate + H(+). It carries out the reaction 1,2,3-tri-(9Z-octadecenoyl)-glycerol + all-trans-retinol = all-trans-retinyl 9Z-octadecenoate + di-(9Z)-octadecenoylglycerol. The triglyceride lipase activity is inhibited by BEL ((E)-6-(bromomethylene)-3-(1-naphthalenyl)-2H-tetrahydropyran-2-one), a suicide substrate inhibitor. Functionally, has abundant triacylglycerol lipase activity. Transfers fatty acid from triglyceride to retinol, hydrolyzes retinylesters, and generates 1,3-diacylglycerol from triglycerides. Additionally possesses acylglycerol transacylase and phospholipase A2 activities. In Homo sapiens (Human), this protein is Patatin-like phospholipase domain-containing protein 4.